The sequence spans 110 residues: Thiosulfate sulfurtransferase GlpE (110 aa).

Residues 17–105 form the Rhodanese domain; it reads RENGAQVVDI…WRSVYPADTS (89 aa). C65 serves as the catalytic Cysteine persulfide intermediate.

It belongs to the GlpE family.

The protein resides in the cytoplasm. The enzyme catalyses thiosulfate + hydrogen cyanide = thiocyanate + sulfite + 2 H(+). It catalyses the reaction thiosulfate + [thioredoxin]-dithiol = [thioredoxin]-disulfide + hydrogen sulfide + sulfite + 2 H(+). In terms of biological role, transferase that catalyzes the transfer of sulfur from thiosulfate to thiophilic acceptors such as cyanide or dithiols. May function in a CysM-independent thiosulfate assimilation pathway by catalyzing the conversion of thiosulfate to sulfite, which can then be used for L-cysteine biosynthesis. The sequence is that of Thiosulfate sulfurtransferase GlpE from Pseudomonas aeruginosa (strain ATCC 15692 / DSM 22644 / CIP 104116 / JCM 14847 / LMG 12228 / 1C / PRS 101 / PAO1).